A 162-amino-acid polypeptide reads, in one-letter code: ATP synthase subunit b (162 aa).

The chain crosses the membrane as a helical span at residues 6 to 26; the sequence is PDIGLLFWMLLSFGIVFFVAA.

This sequence belongs to the ATPase B chain family. In terms of assembly, F-type ATPases have 2 components, F(1) - the catalytic core - and F(0) - the membrane proton channel. F(1) has five subunits: alpha(3), beta(3), gamma(1), delta(1), epsilon(1). F(0) has three main subunits: a(1), b(2) and c(10-14). The alpha and beta chains form an alternating ring which encloses part of the gamma chain. F(1) is attached to F(0) by a central stalk formed by the gamma and epsilon chains, while a peripheral stalk is formed by the delta and b chains.

It is found in the cell inner membrane. Functionally, f(1)F(0) ATP synthase produces ATP from ADP in the presence of a proton or sodium gradient. F-type ATPases consist of two structural domains, F(1) containing the extramembraneous catalytic core and F(0) containing the membrane proton channel, linked together by a central stalk and a peripheral stalk. During catalysis, ATP synthesis in the catalytic domain of F(1) is coupled via a rotary mechanism of the central stalk subunits to proton translocation. Its function is as follows. Component of the F(0) channel, it forms part of the peripheral stalk, linking F(1) to F(0). This Azobacteroides pseudotrichonymphae genomovar. CFP2 protein is ATP synthase subunit b.